Reading from the N-terminus, the 346-residue chain is Thiamine-phosphate synthase (346 aa).

Residues 1 to 125 (MSVTPNPDQH…SKISAQIRYE (125 aa)) are unknown. The thiamine-phosphate synthase stretch occupies residues 126–346 (IYDLEVIILK…SKELLGKLKK (221 aa)). 4-amino-2-methyl-5-(diphosphooxymethyl)pyrimidine contacts are provided by residues 177 to 181 (QYRCK) and N209. Mg(2+)-binding residues include D210 and D229. S248 provides a ligand contact to 4-amino-2-methyl-5-(diphosphooxymethyl)pyrimidine. 274–276 (TKS) provides a ligand contact to 2-[(2R,5Z)-2-carboxy-4-methylthiazol-5(2H)-ylidene]ethyl phosphate. K277 lines the 4-amino-2-methyl-5-(diphosphooxymethyl)pyrimidine pocket. G304 serves as a coordination point for 2-[(2R,5Z)-2-carboxy-4-methylthiazol-5(2H)-ylidene]ethyl phosphate.

It belongs to the thiamine-phosphate synthase family. Mg(2+) is required as a cofactor.

It catalyses the reaction 2-[(2R,5Z)-2-carboxy-4-methylthiazol-5(2H)-ylidene]ethyl phosphate + 4-amino-2-methyl-5-(diphosphooxymethyl)pyrimidine + 2 H(+) = thiamine phosphate + CO2 + diphosphate. It carries out the reaction 2-(2-carboxy-4-methylthiazol-5-yl)ethyl phosphate + 4-amino-2-methyl-5-(diphosphooxymethyl)pyrimidine + 2 H(+) = thiamine phosphate + CO2 + diphosphate. The catalysed reaction is 4-methyl-5-(2-phosphooxyethyl)-thiazole + 4-amino-2-methyl-5-(diphosphooxymethyl)pyrimidine + H(+) = thiamine phosphate + diphosphate. It functions in the pathway cofactor biosynthesis; thiamine diphosphate biosynthesis; thiamine phosphate from 4-amino-2-methyl-5-diphosphomethylpyrimidine and 4-methyl-5-(2-phosphoethyl)-thiazole: step 1/1. Its function is as follows. Condenses 4-methyl-5-(beta-hydroxyethyl)thiazole monophosphate (THZ-P) and 2-methyl-4-amino-5-hydroxymethyl pyrimidine pyrophosphate (HMP-PP) to form thiamine monophosphate (TMP). This is Thiamine-phosphate synthase from Prochlorococcus marinus (strain SARG / CCMP1375 / SS120).